A 400-amino-acid chain; its full sequence is Iron(III) enterobactin esterase (400 aa).

It belongs to the Fes family. As to quaternary structure, monomer.

The protein localises to the cytoplasm. It carries out the reaction Fe(III)-enterobactin + 3 H2O + H(+) = Fe(III)-[N-(2,3-dihydroxybenzoyl)-L-serine] + 2 N-(2,3-dihydroxybenzoyl)-L-serine. The catalysed reaction is Fe(III)-enterobactin + H2O = Fe(III)-[N-(2,3-dihydroxybenzoyl)-L-serine]3 + H(+). The enzyme catalyses Fe(III)-[N-(2,3-dihydroxybenzoyl)-L-serine]3 + H2O + H(+) = Fe(III)-[N-(2,3-dihydroxybenzoyl)-L-serine]2 + N-(2,3-dihydroxybenzoyl)-L-serine. It catalyses the reaction Fe(III)-[N-(2,3-dihydroxybenzoyl)-L-serine]2 + H2O + H(+) = Fe(III)-[N-(2,3-dihydroxybenzoyl)-L-serine] + N-(2,3-dihydroxybenzoyl)-L-serine. It carries out the reaction enterobactin + 3 H2O = 3 N-(2,3-dihydroxybenzoyl)-L-serine + 2 H(+). Inhibited by N-ethylmaleimide. Catalyzes the hydrolysis of ferric enterobactin (Fe-Ent). Is responsible for the release of iron from ferric enterobactin. Also catalyzes the hydrolysis of iron-free enterobactin (Ent). Cleavage of ferric enterobactin results in a mixture of three hydrolysis products, 2,3-dihydroxybenzoylserine (DHBS), the linear dimer (DHBS)2 and the linear trimer (DHBS)3, while cleavage of iron-free enterobactin yields only the monomer. Hydrolysis of ferric enterobactin is less efficient than hydrolysis of unliganded enterobactin. It also cleaves the aluminum (III) complex at a rate similar to the ferric complex. The protein is Iron(III) enterobactin esterase of Escherichia coli (strain K12).